We begin with the raw amino-acid sequence, 547 residues long: Intercellular adhesion molecule 3 (547 aa).

The signal sequence occupies residues 1–29 (MATMVPSVLWPRACWTLLVCCLLTPGVQG). At 30 to 485 (QEFLLRVEPQ…VMDIEAGSSH (456 aa)) the chain is on the extracellular side. Residues 46-103 (GGSLFVNCSTDCPSSEKIALETSLSKELVASGMGWAAFNLSNVTGNSRILCSVYCNGS) form the Ig-like C2-type 1 domain. Asparagine 52, asparagine 84, asparagine 87, asparagine 101, asparagine 110, and asparagine 134 each carry an N-linked (GlcNAc...) asparagine glycan. Intrachain disulfides connect cysteine 53–cysteine 96 and cysteine 57–cysteine 100. An Ig-like C2-type 2 domain is found at 132–197 (GQNFTLRCQV…FSCRTELDMQ (66 aa)). Cysteine 139 and cysteine 190 are oxidised to a cystine. N-linked (GlcNAc...) asparagine glycosylation is found at asparagine 206, asparagine 264, asparagine 295, asparagine 308, asparagine 320, asparagine 363, asparagine 389, asparagine 453, and asparagine 457. Residues 234–301 (ETSWPVDCTL…IVCNVTLGGE (68 aa)) enclose the Ig-like C2-type 3 domain. The cysteines at positions 241 and 294 are disulfide-linked. The region spanning 329 to 382 (GSTVTVSCMAGARVQVTLDGVPAAAPGQPAQLQLNATESDDGRSFFCSATLEVD) is the Ig-like C2-type 4 domain. Cysteine 336 and cysteine 375 are joined by a disulfide. One can recognise an Ig-like C2-type 5 domain in the interval 416–469 (KTRHVLQCQARGNPYPELRCLKEGSSREVPVGIPFFVNVTHNGTYQCQASSSRG). Cysteine 423 and cysteine 462 form a disulfide bridge. Residues 486 to 510 (FVPVFVAVLLTLGVVTIVLALMYVF) form a helical membrane-spanning segment. The Cytoplasmic portion of the chain corresponds to 511–547 (REHQRSGSYHVREESTYLPLTSMQPTEAMGEEPSRAE).

This sequence belongs to the immunoglobulin superfamily. ICAM family. In terms of assembly, interacts with moesin/MSN. In terms of processing, upon stimulation by a physiologic stimuli becomes rapidly and transiently phosphorylated on serine residues. N-glycosylated; glycans consist of a mixture of tri- and tetra-antennary complex-type chains and high-mannose chains. Leukocytes.

It is found in the membrane. ICAM proteins are ligands for the leukocyte adhesion protein LFA-1 (integrin alpha-L/beta-2). ICAM3 is also a ligand for integrin alpha-D/beta-2. In association with integrin alpha-L/beta-2, contributes to apoptotic neutrophil phagocytosis by macrophages. The sequence is that of Intercellular adhesion molecule 3 (ICAM3) from Homo sapiens (Human).